Consider the following 84-residue polypeptide: Putative defensin-like protein 165 (84 aa).

The first 27 residues, 1-27 (MSTKLFSYFMLLVVLFSVLTIIPKTEA), serve as a signal peptide directing secretion. 4 disulfides stabilise this stretch: cysteine 31–cysteine 78, cysteine 41–cysteine 60, cysteine 46–cysteine 72, and cysteine 50–cysteine 74.

The protein belongs to the DEFL family.

Its subcellular location is the secreted. The polypeptide is Putative defensin-like protein 165 (LCR12) (Arabidopsis thaliana (Mouse-ear cress)).